Reading from the N-terminus, the 271-residue chain is 2-aminophenol 1,6-dioxygenase alpha subunit (271 aa).

This sequence belongs to the LigB/MhpB extradiol dioxygenase family. In terms of assembly, heterotetramer of 2 alpha and 2 beta subunits.

In terms of biological role, component of the 2-aminophenol 1,6-dioxygenase complex that catalyzes the ring fission of 2-aminophenol to produce 2-aminomuconic 6-semialdehyde. AmnA seems to have a role in the stability of the complex. The sequence is that of 2-aminophenol 1,6-dioxygenase alpha subunit (amnA) from Pseudomonas sp.